Reading from the N-terminus, the 404-residue chain is F-box protein At2g17036 (404 aa).

The F-box domain occupies 2–50 (MDWATLPKDLLDLISKCLESSFDLIQFRSVCSSWRSAAGPKRLLWAHNL).

This is F-box protein At2g17036 from Arabidopsis thaliana (Mouse-ear cress).